We begin with the raw amino-acid sequence, 393 residues long: Dual specificity mitogen-activated protein kinase kinase 1 (393 aa).

A disordered region spans residues M1 to E27. Residues F68 to I361 enclose the Protein kinase domain. ATP-binding positions include L74–V82 and K97. D190 functions as the Proton acceptor in the catalytic mechanism. Phosphoserine; by RAF is present on residues S218 and S222. The RAF1-binding stretch occupies residues E270–P307. The residue at position 286 (T286) is a Phosphothreonine. The residue at position 292 (T292) is a Phosphothreonine; by MAPK1. S298 bears the Phosphoserine; by PAK mark.

Belongs to the protein kinase superfamily. STE Ser/Thr protein kinase family. MAP kinase kinase subfamily. Found in a complex with at least BRAF, HRAS, MAP2K1, MAPK3/ERK1 and RGS14. Forms a heterodimer with MAP2K2/MEK2. Forms heterodimers with KSR2 which further dimerize to form tetramers. Interacts with KSR1 or KSR2 and BRAF; the interaction with KSR1 or KSR2 mediates KSR1-BRAF or KSR2-BRAF dimerization. Interacts with ARBB2, LAMTOR3, MAPK1/ERK2 and RAF1. Interacts with MAPK1/ERK2. Interacts with MORG1. Interacts with PPARG. Interacts with SGK1. Interacts with BIRC6/bruce. Interacts with KAT7; the interaction promotes KAT7 phosphorylation. Interacts with RAF1 and NEK10; the interaction is required for ERK1/2-signaling pathway activation in response to UV irradiation. Interacts with TRAF3IP3. Interacts with MOS. Phosphorylation at Ser-218 and Ser-222 by MAP kinase kinase kinases (RAF or MEKK1) positively regulates the kinase activity. Also phosphorylated at Thr-292 by MAPK1/ERK2 and at Ser-298 by PAK. MAPK1/ERK2 phosphorylation of Thr-292 occurs in response to cellular adhesion and leads to inhibition of Ser-298 phosphorylation by PAK. Autophosphorylated at Ser-218 and Ser-222, autophosphosphorylation is promoted by NEK10 following UV irradiation.

It is found in the cytoplasm. The protein localises to the cytoskeleton. Its subcellular location is the microtubule organizing center. The protein resides in the centrosome. It localises to the spindle pole body. It is found in the nucleus. The protein localises to the membrane. The enzyme catalyses L-seryl-[protein] + ATP = O-phospho-L-seryl-[protein] + ADP + H(+). It catalyses the reaction L-threonyl-[protein] + ATP = O-phospho-L-threonyl-[protein] + ADP + H(+). The catalysed reaction is L-tyrosyl-[protein] + ATP = O-phospho-L-tyrosyl-[protein] + ADP + H(+). Ras proteins such as HRAS mediate the activation of RAF proteins such as RAF1 or BRAF which in turn activate extracellular signal-regulated kinases (ERK) through MAPK (mitogen-activated protein kinases) and ERK kinases MAP2K1/MEK1 and MAP2K2/MEK2. Activation occurs through phosphorylation of Ser-218 and Ser-222. MAP2K1/MEK1 binds KSR1 or KSR2 releasing the inhibitory intramolecular interaction between KSR1 or KSR2 protein kinase and N-terminal domains. This allows KSR1 or KSR2 dimerization with BRAF leading to BRAF activation and phosphorylation of MAP2K1. MAP2K1/MEK1 is also the target of negative feed-back regulation by its substrate kinases, such as MAPK1/ERK2. These phosphorylate MAP2K1/MEK1 on Thr-292, thereby facilitating dephosphorylation of the activating residues Ser-218 and Ser-222. Inhibited by serine/threonine phosphatase 2A. Its function is as follows. Dual specificity protein kinase which acts as an essential component of the MAP kinase signal transduction pathway. Binding of extracellular ligands such as growth factors, cytokines and hormones to their cell-surface receptors activates RAS and this initiates RAF1 activation. RAF1 then further activates the dual-specificity protein kinases MAP2K1/MEK1 and MAP2K2/MEK2. Both MAP2K1/MEK1 and MAP2K2/MEK2 function specifically in the MAPK/ERK cascade, and catalyze the concomitant phosphorylation of a threonine and a tyrosine residue in a Thr-Glu-Tyr sequence located in the extracellular signal-regulated kinases MAPK3/ERK1 and MAPK1/ERK2, leading to their activation and further transduction of the signal within the MAPK/ERK cascade. Activates BRAF in a KSR1 or KSR2-dependent manner; by binding to KSR1 or KSR2 releases the inhibitory intramolecular interaction between KSR1 or KSR2 protein kinase and N-terminal domains which promotes KSR1 or KSR2-BRAF dimerization and BRAF activation. Depending on the cellular context, this pathway mediates diverse biological functions such as cell growth, adhesion, survival and differentiation, predominantly through the regulation of transcription, metabolism and cytoskeletal rearrangements. One target of the MAPK/ERK cascade is peroxisome proliferator-activated receptor gamma (PPARG), a nuclear receptor that promotes differentiation and apoptosis. MAP2K1/MEK1 has been shown to export PPARG from the nucleus. The MAPK/ERK cascade is also involved in the regulation of endosomal dynamics, including lysosome processing and endosome cycling through the perinuclear recycling compartment (PNRC), as well as in the fragmentation of the Golgi apparatus during mitosis. This Oryctolagus cuniculus (Rabbit) protein is Dual specificity mitogen-activated protein kinase kinase 1 (MAP2K1).